The sequence spans 443 residues: Ribulose bisphosphate carboxylase large chain (443 aa).

Substrate-binding residues include Asn89 and Thr139. Lys141 acts as the Proton acceptor in catalysis. Lys143 is a binding site for substrate. 3 residues coordinate Mg(2+): Lys167, Asp169, and Glu170. Residue Lys167 is modified to N6-carboxylysine. The active-site Proton acceptor is His260. Residues Arg261, His293, and Ser345 each coordinate substrate.

The protein belongs to the RuBisCO large chain family. Type I subfamily. As to quaternary structure, heterohexadecamer of 8 large chains and 8 small chains; disulfide-linked. The disulfide link is formed within the large subunit homodimers. It depends on Mg(2+) as a cofactor. In terms of processing, the disulfide bond which can form in the large chain dimeric partners within the hexadecamer appears to be associated with oxidative stress and protein turnover.

Its subcellular location is the plastid. It is found in the chloroplast. It catalyses the reaction 2 (2R)-3-phosphoglycerate + 2 H(+) = D-ribulose 1,5-bisphosphate + CO2 + H2O. The enzyme catalyses D-ribulose 1,5-bisphosphate + O2 = 2-phosphoglycolate + (2R)-3-phosphoglycerate + 2 H(+). Functionally, ruBisCO catalyzes two reactions: the carboxylation of D-ribulose 1,5-bisphosphate, the primary event in carbon dioxide fixation, as well as the oxidative fragmentation of the pentose substrate in the photorespiration process. Both reactions occur simultaneously and in competition at the same active site. The sequence is that of Ribulose bisphosphate carboxylase large chain from Verbena bonariensis (Argentinian vervain).